The following is a 444-amino-acid chain: Phosphoglucosamine mutase (444 aa).

Serine 102 serves as the catalytic Phosphoserine intermediate. Mg(2+) contacts are provided by serine 102, aspartate 241, aspartate 243, and aspartate 245. Phosphoserine is present on serine 102.

This sequence belongs to the phosphohexose mutase family. Mg(2+) is required as a cofactor. In terms of processing, activated by phosphorylation.

It catalyses the reaction alpha-D-glucosamine 1-phosphate = D-glucosamine 6-phosphate. In terms of biological role, catalyzes the conversion of glucosamine-6-phosphate to glucosamine-1-phosphate. The polypeptide is Phosphoglucosamine mutase (Erwinia tasmaniensis (strain DSM 17950 / CFBP 7177 / CIP 109463 / NCPPB 4357 / Et1/99)).